We begin with the raw amino-acid sequence, 471 residues long: Tigger transposable element-derived protein 3 (471 aa).

The HTH psq-type domain occupies 3–55 (LSSKKKLHALSLAEKIQVLELLDESKMSQSEVARRFQVSQPQISRICKNKEKL). 2 consecutive DNA-binding regions (H-T-H motif) follow at residues 31 to 51 (QSEV…ICKN) and 100 to 130 (PMLL…WKRR). The region spanning 67–137 (ERKRKRESKY…KRRNNVGFGA (71 aa)) is the HTH CENPB-type domain. The DDE-1 domain maps to 167–360 (FSPEDVFGCA…VPPQLIFSSF (194 aa)).

It belongs to the tigger transposable element derived protein family.

It is found in the nucleus. The chain is Tigger transposable element-derived protein 3 (TIGD3) from Homo sapiens (Human).